Here is a 412-residue protein sequence, read N- to C-terminus: L-threonine:uridine-5'-aldehyde transaldolase (412 aa).

Lys229 bears the N6-(pyridoxal phosphate)lysine mark.

It belongs to the SHMT family. Pyridoxal 5'-phosphate serves as cofactor.

The catalysed reaction is uridine-5'-aldehyde + L-threonine = (5'S,6'S)-C-glycyluridine + acetaldehyde. It participates in antibiotic biosynthesis. Its function is as follows. Transaldolase involved in the biosynthesis of the capuramycin-type nucleoside antibiotic A-503083. Catalyzes the condensation of L-threonine and uridine-5'-aldehyde to form 5'-C-glycyluridine (GlyU). Forms (5'S,6'S)-GlyU. This Streptomyces sp protein is L-threonine:uridine-5'-aldehyde transaldolase.